A 43-amino-acid chain; its full sequence is Photosystem I reaction center subunit IX (43 aa).

The helical transmembrane segment at 7-27 (YLSVAPVLSTLWFGSLAGLLI) threads the bilayer.

It belongs to the PsaJ family.

It is found in the plastid. The protein localises to the chloroplast thylakoid membrane. Functionally, may help in the organization of the PsaE and PsaF subunits. In Aethionema cordifolium (Lebanon stonecress), this protein is Photosystem I reaction center subunit IX.